Consider the following 796-residue polypeptide: AUGMIN subunit 5 (796 aa).

Residues 79–120 (HGGSSNASIGSSVNPGKEESKSKGRRKDKTVTGESSSYAEDR) are disordered. Polar residues predominate over residues 80–92 (GGSSNASIGSSVN). Coiled coils occupy residues 115-191 (SYAE…EATR) and 462-501 (GKEREAAGLRASLNTLLSEIQRLNKLCAERKEAEDSLKKK).

The protein belongs to the HAUS5 family. Part of the augmin complex composed of 8 subunits. The complex acts on microtubules and interacts with gamma-tubulin in spindles and the phragmoplast.

It localises to the cytoplasm. The protein localises to the cytoskeleton. Its subcellular location is the spindle. It is found in the phragmoplast. Its function is as follows. Involved in microtubules reorganization during spindle and phragmoplast development. The sequence is that of AUGMIN subunit 5 from Arabidopsis thaliana (Mouse-ear cress).